A 116-amino-acid polypeptide reads, in one-letter code: Selenoprotein H (116 aa).

Lysine 20 carries the post-translational modification N6-acetyllysine. Residues 35–38 (CTSU) constitute a cross-link (cysteinyl-selenocysteine (Cys-Sec); redox-active). Residue selenocysteine 38 is a non-standard amino acid, selenocysteine.

The protein belongs to the SelWTH family.

May be involved in a redox-related process. The chain is Selenoprotein H from Mus musculus (Mouse).